Consider the following 298-residue polypeptide: Glycine--tRNA ligase alpha subunit (298 aa).

It belongs to the class-II aminoacyl-tRNA synthetase family. In terms of assembly, tetramer of two alpha and two beta subunits.

It localises to the cytoplasm. The catalysed reaction is tRNA(Gly) + glycine + ATP = glycyl-tRNA(Gly) + AMP + diphosphate. The chain is Glycine--tRNA ligase alpha subunit from Helicobacter pylori (strain HPAG1).